A 177-amino-acid chain; its full sequence is NADH-quinone oxidoreductase subunit B (177 aa).

Positions 56, 57, 121, and 151 each coordinate [4Fe-4S] cluster.

The protein belongs to the complex I 20 kDa subunit family. As to quaternary structure, NDH-1 is composed of 14 different subunits. Subunits NuoB, C, D, E, F, and G constitute the peripheral sector of the complex. [4Fe-4S] cluster is required as a cofactor.

Its subcellular location is the cell inner membrane. It carries out the reaction a quinone + NADH + 5 H(+)(in) = a quinol + NAD(+) + 4 H(+)(out). Its function is as follows. NDH-1 shuttles electrons from NADH, via FMN and iron-sulfur (Fe-S) centers, to quinones in the respiratory chain. Couples the redox reaction to proton translocation (for every two electrons transferred, four hydrogen ions are translocated across the cytoplasmic membrane), and thus conserves the redox energy in a proton gradient. The sequence is that of NADH-quinone oxidoreductase subunit B from Sphingopyxis alaskensis (strain DSM 13593 / LMG 18877 / RB2256) (Sphingomonas alaskensis).